A 290-amino-acid chain; its full sequence is Undecaprenyl-diphosphatase (290 aa).

The next 8 helical transmembrane spans lie at 1–21, 49–69, 101–121, 126–146, 160–180, 203–223, 232–252, and 266–286; these read MALW…FLPV, MILF…VVFW, LFWL…TLKA, VFAS…LLWW, INLK…MPGL, YSFF…AIEV, VGFS…IISL, and VFSF…IDLA.

The protein belongs to the UppP family.

The protein resides in the cell inner membrane. The enzyme catalyses di-trans,octa-cis-undecaprenyl diphosphate + H2O = di-trans,octa-cis-undecaprenyl phosphate + phosphate + H(+). Functionally, catalyzes the dephosphorylation of undecaprenyl diphosphate (UPP). Confers resistance to bacitracin. The protein is Undecaprenyl-diphosphatase of Alkalilimnicola ehrlichii (strain ATCC BAA-1101 / DSM 17681 / MLHE-1).